Consider the following 86-residue polypeptide: MKSIVFVALFGLALLAVVCSASEDAHKELLKEVVRAMVVDKTDAVQAEERECRWYLGGCSQDGDCCKHLQCHSNYEWCIWDGTSSK.

Residues 1–21 form the signal peptide; that stretch reads MKSIVFVALFGLALLAVVCSA. Residues 22 to 50 constitute a propeptide that is removed on maturation; sequence SEDAHKELLKEVVRAMVVDKTDAVQAEER. Cystine bridges form between C52/C66, C59/C71, and C65/C78.

The protein belongs to the neurotoxin 10 (Hwtx-1) family. 17 (Hntx-9) subfamily. As to expression, expressed by the venom gland.

Its subcellular location is the secreted. Functionally, ion channel inhibitor. This is Omega-theraphotoxin-Hhn1c from Cyriopagopus hainanus (Chinese bird spider).